The following is a 62-amino-acid chain: Large ribosomal subunit protein eL37 (62 aa).

Zn(2+)-binding residues include C20, C23, C35, and C38. The C4-type zinc-finger motif lies at 20–38; that stretch reads CRRCGRVSYNVKKGYCAAC.

Belongs to the eukaryotic ribosomal protein eL37 family. In terms of assembly, part of the 50S ribosomal subunit. Requires Zn(2+) as cofactor.

Functionally, binds to the 23S rRNA. This Pyrococcus furiosus (strain ATCC 43587 / DSM 3638 / JCM 8422 / Vc1) protein is Large ribosomal subunit protein eL37.